We begin with the raw amino-acid sequence, 119 residues long: Large ribosomal subunit protein bL20 (119 aa).

This sequence belongs to the bacterial ribosomal protein bL20 family.

Its function is as follows. Binds directly to 23S ribosomal RNA and is necessary for the in vitro assembly process of the 50S ribosomal subunit. It is not involved in the protein synthesizing functions of that subunit. The sequence is that of Large ribosomal subunit protein bL20 from Bordetella petrii (strain ATCC BAA-461 / DSM 12804 / CCUG 43448).